The following is a 154-amino-acid chain: Large ribosomal subunit protein bL17 (154 aa).

The disordered stretch occupies residues 127-154; that stretch reads TAAKQDRAKRVKGSKKAETEKEGGESAE. Basic and acidic residues predominate over residues 141–154; that stretch reads KKAETEKEGGESAE.

The protein belongs to the bacterial ribosomal protein bL17 family. As to quaternary structure, part of the 50S ribosomal subunit. Contacts protein L32.

The polypeptide is Large ribosomal subunit protein bL17 (Chlorobaculum parvum (strain DSM 263 / NCIMB 8327) (Chlorobium vibrioforme subsp. thiosulfatophilum)).